Here is a 551-residue protein sequence, read N- to C-terminus: RCC1 and BTB domain-containing protein 2 (551 aa).

RCC1 repeat units follow at residues 64–115 (NDEI…VLAT), 117–169 (EGEV…VLTS), 171–222 (GEVF…AVVD), 223–274 (TGEV…VLTD), 276–326 (GQVY…AAKT), and 328–382 (GGHV…TVAE). The region spanning 394-457 (ADLKFLVDGK…LYTDSISLSP (64 aa)) is the BTB domain.

The protein resides in the cytoplasmic vesicle. It is found in the secretory vesicle. Its subcellular location is the acrosome. The sequence is that of RCC1 and BTB domain-containing protein 2 (RCBTB2) from Homo sapiens (Human).